The chain runs to 700 residues: mRNA cap guanine-N(7) methyltransferase (700 aa).

Composition is skewed to basic and acidic residues over residues 1 to 10 (MVYDPIRDCD) and 52 to 67 (EPPR…ESHR). Disordered stretches follow at residues 1–263 (MVYD…SVLR) and 277–392 (AHAN…ERNK). Polar residues predominate over residues 113-128 (RSPSMSLSPRSQNQSL). Low complexity-rich tracts occupy residues 129–144 (PYPS…SAHP) and 220–241 (PQPT…TPHH). The mRNA cap 0 methyltransferase domain occupies 429 to 700 (SPIIGLKKFN…LYMGFAFEKM (272 aa)). 438–439 (NN) is an mRNA binding site. Lysine 442, glycine 461, aspartate 483, aspartate 512, glutamine 538, and tyrosine 543 together coordinate S-adenosyl-L-methionine.

Belongs to the class I-like SAM-binding methyltransferase superfamily. mRNA cap 0 methyltransferase family.

The protein localises to the nucleus. It carries out the reaction a 5'-end (5'-triphosphoguanosine)-ribonucleoside in mRNA + S-adenosyl-L-methionine = a 5'-end (N(7)-methyl 5'-triphosphoguanosine)-ribonucleoside in mRNA + S-adenosyl-L-homocysteine. Responsible for methylating the 5'-cap structure of mRNAs. In Cryptococcus neoformans var. neoformans serotype D (strain B-3501A) (Filobasidiella neoformans), this protein is mRNA cap guanine-N(7) methyltransferase (ABD1).